The following is a 432-amino-acid chain: Glutamyl-tRNA reductase (432 aa).

Substrate-binding positions include 50–53, serine 110, 115–117, and glutamine 121; these read TCNR and ETQ. Cysteine 51 acts as the Nucleophile in catalysis. Position 190-195 (190-195) interacts with NADP(+); the sequence is GVGEMS.

The protein belongs to the glutamyl-tRNA reductase family. As to quaternary structure, homodimer.

The enzyme catalyses (S)-4-amino-5-oxopentanoate + tRNA(Glu) + NADP(+) = L-glutamyl-tRNA(Glu) + NADPH + H(+). Its pathway is porphyrin-containing compound metabolism; protoporphyrin-IX biosynthesis; 5-aminolevulinate from L-glutamyl-tRNA(Glu): step 1/2. Catalyzes the NADPH-dependent reduction of glutamyl-tRNA(Glu) to glutamate 1-semialdehyde (GSA). The chain is Glutamyl-tRNA reductase from Sulfurimonas denitrificans (strain ATCC 33889 / DSM 1251) (Thiomicrospira denitrificans (strain ATCC 33889 / DSM 1251)).